The primary structure comprises 446 residues: Argininosuccinate lyase (446 aa).

This sequence belongs to the lyase 1 family. Argininosuccinate lyase subfamily.

It is found in the cytoplasm. It carries out the reaction 2-(N(omega)-L-arginino)succinate = fumarate + L-arginine. It participates in amino-acid biosynthesis; L-arginine biosynthesis; L-arginine from L-ornithine and carbamoyl phosphate: step 3/3. The protein is Argininosuccinate lyase of Sulfurisphaera tokodaii (strain DSM 16993 / JCM 10545 / NBRC 100140 / 7) (Sulfolobus tokodaii).